The primary structure comprises 418 residues: Putative ion-transport protein YfeO (418 aa).

12 helical membrane passes run 10–30 (LLLS…LIVV), 54–74 (DSPI…GLVI), 99–119 (ALPG…SLGP), 120–140 (EHPI…RLLP), 149–169 (ILAS…AALI), 186–206 (LFAP…FFHP), 223–243 (ILSG…AVWC), 258–278 (VLVL…GGPV), 300–320 (DYFL…ASGF), 322–342 (GGRI…LHEH), 343–363 (VPAV…VLVV), and 371–391 (LFMA…CIVM).

Belongs to the chloride channel (TC 2.A.49) family.

It localises to the cell membrane. The sequence is that of Putative ion-transport protein YfeO from Shigella sonnei (strain Ss046).